We begin with the raw amino-acid sequence, 278 residues long: Sulfur carrier protein FdhD (278 aa).

The active-site Cysteine persulfide intermediate is cysteine 113. Mo-bis(molybdopterin guanine dinucleotide) is bound at residue 251–256 (FCRNGR).

This sequence belongs to the FdhD family.

It localises to the cytoplasm. Its function is as follows. Required for formate dehydrogenase (FDH) activity. Acts as a sulfur carrier protein that transfers sulfur from IscS to the molybdenum cofactor prior to its insertion into FDH. The protein is Sulfur carrier protein FdhD of Shewanella oneidensis (strain ATCC 700550 / JCM 31522 / CIP 106686 / LMG 19005 / NCIMB 14063 / MR-1).